A 108-amino-acid chain; its full sequence is Ig kappa chain V region 120 (108 aa).

Residues 1-23 (AFELTQTPSSVEAAVGGTVTIKC) are framework-1. The complementarity-determining-1 stretch occupies residues 24–34 (QSSQSIGTYLA). The interval 35 to 49 (WYZZKPGQPPKLLIY) is framework-2. Residues 50–56 (RASTLAS) are complementarity-determining-2. Residues 57-88 (GVSSRFKGSGSGTEFTLTISGVECADAATYYC) are framework-3. The complementarity-determining-3 stretch occupies residues 89 to 97 (QGTYYZSAS). Residues 98 to 107 (FGGGTEVVVK) are framework-4.

This Oryctolagus cuniculus (Rabbit) protein is Ig kappa chain V region 120.